The sequence spans 233 residues: LexA repressor (233 aa).

The segment at residues 26-46 (FDEMKDALDLRSKSGIHRLIT) is a DNA-binding region (H-T-H motif). Residues Ser154 and Lys192 each act as for autocatalytic cleavage activity in the active site.

It belongs to the peptidase S24 family. Homodimer.

The enzyme catalyses Hydrolysis of Ala-|-Gly bond in repressor LexA.. Represses a number of genes involved in the response to DNA damage (SOS response), including recA and lexA. In the presence of single-stranded DNA, RecA interacts with LexA causing an autocatalytic cleavage which disrupts the DNA-binding part of LexA, leading to derepression of the SOS regulon and eventually DNA repair. This chain is LexA repressor, found in Nitrobacter hamburgensis (strain DSM 10229 / NCIMB 13809 / X14).